Reading from the N-terminus, the 122-residue chain is Large ribosomal subunit protein uL14c (122 aa).

This sequence belongs to the universal ribosomal protein uL14 family. In terms of assembly, part of the 50S ribosomal subunit.

It localises to the plastid. The protein resides in the chloroplast. Its function is as follows. Binds to 23S rRNA. The protein is Large ribosomal subunit protein uL14c of Nicotiana tomentosiformis (Tobacco).